The primary structure comprises 246 residues: Major prion protein (246 aa).

The N-terminal stretch at 1 to 15 (MLVLFVATWSDLGLC) is a signal peptide. An interaction with GRB2, ERI3 and SYN1 region spans residues 16–223 (KKRPKPGGWN…ESQAYYQRGS (208 aa)). The tract at residues 18–102 (RPKPGGWNTG…HKPSKPKTSM (85 aa)) is disordered. A run of 5 repeats spans residues 44–52 (PQGGGGWGQ), 53–60 (PHGGGWGQ), 61–68 (PHGGGWGQ), 69–76 (PHGGGWGQ), and 77–84 (PHGGGWGQ). The interval 44-84 (PQGGGGWGQPHGGGWGQPHGGGWGQPHGGGWGQPHGGGWGQ) is 5 X 8 AA tandem repeats of P-H-G-G-G-W-G-Q. The segment covering 45–88 (QGGGGWGQPHGGGWGQPHGGGWGQPHGGGWGQPHGGGWGQGGGT) has biased composition (gly residues). Cu(2+) is bound by residues H54, G55, G56, H62, G63, G64, H70, G71, G72, H78, G79, and G80. Over residues 91-102 (QWHKPSKPKTSM) the composition is skewed to basic residues. C172 and C207 are disulfide-bonded. 2 N-linked (GlcNAc...) asparagine glycosylation sites follow: N174 and N190. S223 carries GPI-anchor amidated serine lipidation. Residues 224–246 (SMVLFSSPPVILLISFLIFLIVG) constitute a propeptide, removed in mature form.

The protein belongs to the prion family. In terms of assembly, monomer and homodimer. Has a tendency to aggregate into amyloid fibrils containing a cross-beta spine, formed by a steric zipper of superposed beta-strands. Soluble oligomers may represent an intermediate stage on the path to fibril formation. Copper binding may promote oligomerization. Interacts with GRB2, APP, ERI3/PRNPIP and SYN1. Mislocalized cytosolically exposed PrP interacts with MGRN1; this interaction alters MGRN1 subcellular location and causes lysosomal enlargement. Interacts with KIAA1191.

The protein resides in the cell membrane. The protein localises to the golgi apparatus. In terms of biological role, its primary physiological function is unclear. Has cytoprotective activity against internal or environmental stresses. May play a role in neuronal development and synaptic plasticity. May be required for neuronal myelin sheath maintenance. May play a role in iron uptake and iron homeostasis. Soluble oligomers are toxic to cultured neuroblastoma cells and induce apoptosis (in vitro). Association with GPC1 (via its heparan sulfate chains) targets PRNP to lipid rafts. Also provides Cu(2+) or Zn(2+) for the ascorbate-mediated GPC1 deaminase degradation of its heparan sulfate side chains. This chain is Major prion protein (PRNP), found in Cercocebus atys (Sooty mangabey).